The chain runs to 659 residues: Protein real-time (659 aa).

Residues 3–175 (QKFQSPVRVY…FIGQLREEGI (173 aa)) enclose the PRELI/MSF1 domain. Positions 286 to 462 (KPAVVVEHFP…FLGGPCKTMI (177 aa)) constitute a CRAL-TRIO domain. S477 carries the post-translational modification Phosphoserine. Residues 512–631 (HRNLYKSVDL…QLNVFYEVLS (120 aa)) enclose the GOLD domain.

Restricted to the developing gut and central nervous system (CNS).

The protein resides in the mitochondrion. The polypeptide is Protein real-time (retm) (Drosophila melanogaster (Fruit fly)).